Consider the following 371-residue polypeptide: Bifunctional enzyme IspD/IspF (371 aa).

Positions 1–210 (MSEISLIMLA…LDLPKPSFEI (210 aa)) are 2-C-methyl-D-erythritol 4-phosphate cytidylyltransferase. Residues 211-371 (FTGNGFDVHE…NLKYFDWTRL (161 aa)) are 2-C-methyl-D-erythritol 2,4-cyclodiphosphate synthase. A divalent metal cation-binding residues include D217 and H219. Residues 217 to 219 (DVH) and 243 to 244 (HS) each bind 4-CDP-2-C-methyl-D-erythritol 2-phosphate. Residue H251 participates in a divalent metal cation binding. 4-CDP-2-C-methyl-D-erythritol 2-phosphate is bound by residues 265-267 (DIG), 270-274 (YPDTD), 341-344 (TTTE), F348, and R351.

The protein in the N-terminal section; belongs to the IspD/TarI cytidylyltransferase family. IspD subfamily. It in the C-terminal section; belongs to the IspF family. It depends on a divalent metal cation as a cofactor.

It carries out the reaction 2-C-methyl-D-erythritol 4-phosphate + CTP + H(+) = 4-CDP-2-C-methyl-D-erythritol + diphosphate. The enzyme catalyses 4-CDP-2-C-methyl-D-erythritol 2-phosphate = 2-C-methyl-D-erythritol 2,4-cyclic diphosphate + CMP. It participates in isoprenoid biosynthesis; isopentenyl diphosphate biosynthesis via DXP pathway; isopentenyl diphosphate from 1-deoxy-D-xylulose 5-phosphate: step 2/6. The protein operates within isoprenoid biosynthesis; isopentenyl diphosphate biosynthesis via DXP pathway; isopentenyl diphosphate from 1-deoxy-D-xylulose 5-phosphate: step 4/6. Bifunctional enzyme that catalyzes the formation of 4-diphosphocytidyl-2-C-methyl-D-erythritol from CTP and 2-C-methyl-D-erythritol 4-phosphate (MEP) (IspD), and catalyzes the conversion of 4-diphosphocytidyl-2-C-methyl-D-erythritol 2-phosphate (CDP-ME2P) to 2-C-methyl-D-erythritol 2,4-cyclodiphosphate (ME-CPP) with a corresponding release of cytidine 5-monophosphate (CMP) (IspF). This is Bifunctional enzyme IspD/IspF from Campylobacter jejuni subsp. doylei (strain ATCC BAA-1458 / RM4099 / 269.97).